Here is a 64-residue protein sequence, read N- to C-terminus: Temporin-ALe (64 aa).

An N-terminal signal peptide occupies residues 1-22 (MFTLKKSLLLLFFLGTINLSLC). A propeptide spanning residues 23–47 (EQERNAEEERRDEPDERNAEVEKRF) is cleaved from the precursor. Leucine amide is present on Leu62.

Expressed by the skin glands.

It localises to the secreted. In terms of biological role, antimicrobial peptide with activity against Gram-positive and Gram-negative bacteria and against fungi. Has been tested against S.aureus (MIC=1.25 ug/mL), B.pumilus (MIC=5.0 ug/mL), B.cereus (MIC=15.0 ug/mL), E.coli (MIC=1.25 ug/mL), B.dysenteriae (MIC=5.0 ug/mL), A.cacoaceticus (MIC=15.0 ug/mL), P.aeruginosa (MIC=5.0 ug/mL) and C.albicans (MIC=1.25 ug/mL). Also shows a weak hemolytic activity. This chain is Temporin-ALe, found in Amolops loloensis (Lolokou Sucker Frog).